Here is a 463-residue protein sequence, read N- to C-terminus: POU domain, class 2, transcription factor 2 (463 aa).

Disordered stretches follow at residues 1-87 (MVHS…QPHL), 159-182 (QPRAGLPTQPPKCLEPPSHPEEPS), 259-282 (SSLPSPNQLSSPSLGFDGLPGRRR), 341-376 (PCSAAPMLPSPGKPTSYSPHLVTPQGGAGTLPLSQA), and 393-463 (TLHP…PYQP). A compositionally biased stretch (basic and acidic residues) spans 12–37 (RMSKPLEAEKQSLDSPSEHTDTERNG). A compositionally biased stretch (polar residues) spans 41 to 60 (NHQNPQNKASPFSVSPTGPS). Residues 75–85 (AAPPPPQPAQP) show a composition bias toward pro residues. Residues 179-253 (EEPSDLEELE…LLEKWLNDAE (75 aa)) form the POU-specific domain. Residues 259–272 (SSLPSPNQLSSPSL) show a composition bias toward low complexity. The homeobox DNA-binding region spans 281-340 (RRKKRTSIETNVRFALEKSFLANQKPTSEEILLIAEQLHMEKEVIRVWFCNRRQKEKRIN). Residues 373 to 394 (LSQASSSLSTTVTTLSSAVGTL) form a leucine-zipper region. The segment covering 400-409 (AGGGGGGGGA) has biased composition (gly residues).

The protein belongs to the POU transcription factor family. Class-2 subfamily. In terms of assembly, interacts with NR3C1, AR and PGR. Interacts with POU2AF1; the interaction increases POU2F2 transactivation activity. Highest in B cells, but also present in brain (neuronal and glial cells), intestine, kidney, and testes. As to expression, expressed at higher levels in B-cells than in neuronal cells. In terms of tissue distribution, expressed in neuronal cell lines and brain, but not dorsal root ganglia. Expressed at lower levels in neuronal cells than in B cells. As to expression, expressed in neuronal cell lines, and at lower levels in neuroblastoma and dorsal root ganglia. In terms of tissue distribution, widely expressed in the developing nervous system but expression is confined to very specific regions in the adult brain, it is expressed at a lower level in B cells. Either absent in, or expressed at very low levels in neuronal cells and brain. As to expression, expressed in all tissues tested: mammary gland, liver, spleen, lung, kidney intestine, uterus and ovary of a virgin mouse. Levels of isoform OCT2.7 are highest in spleen and lung. In mammary gland, expression is localized to the alveolus epithelial cells.

It is found in the cytoplasm. It localises to the nucleus. With respect to regulation, transactivation activity is enhanced by transcriptional coactivator POU2AF1. Functionally, transcription factor that specifically binds to the octamer motif (5'-ATTTGCAT-3'). Regulates IL6 expression in B cells with POU2AF1. Regulates transcription in a number of tissues in addition to activating immunoglobulin gene expression. Modulates transcription transactivation by NR3C1, AR and PGR. In terms of biological role, activates octamer-containing promoters. Its function is as follows. Represses some promoters and activate others. Represses some promoters and activate others. Activates the U2 small nuclear RNA (snRNA) promoter. Functionally, unable to bind to the octamer motif, but can still activate the beta-casein gene promoter at low levels. The sequence is that of POU domain, class 2, transcription factor 2 from Mus musculus (Mouse).